Consider the following 2225-residue polypeptide: Multifunctional protein CAD (2225 aa).

An N-acetylalanine modification is found at alanine 2. The GATase (Glutamine amidotransferase) stretch occupies residues 2–365; it reads AALVLEDGSV…TVKEATAGNP (364 aa). Serine 44, glycine 222, and glycine 224 together coordinate L-glutamine. Residues 177 to 363 enclose the Glutamine amidotransferase type-1 domain; that stretch reads RILALDCGLK…LETVKEATAG (187 aa). The active-site Nucleophile; for GATase activity is the cysteine 252. Leucine 253, glutamine 256, asparagine 294, glycine 296, and phenylalanine 297 together coordinate L-glutamine. Residues histidine 336 and glutamate 338 each act as for GATase activity in the active site. The interval 366 to 394 is linker; sequence GGQTVRERLTERLCPPGIPTPGSGLPPPR. The CPSase A stretch occupies residues 395 to 933; it reads KVLILGSGGL…TTHDLTFRTP (539 aa). The CPSase (Carbamoyl phosphate synthase) stretch occupies residues 395-1455; it reads KVLILGSGGL…APPLKVHVDC (1061 aa). Threonine 456 bears the Phosphothreonine; by MAPK1 mark. ATP is bound by residues arginine 515, arginine 555, glycine 561, glycine 562, lysine 592, glutamate 599, glycine 625, isoleucine 626, histidine 627, glutamine 668, and glutamate 682. Residues 519–711 form the ATP-grasp 1 domain; that stretch reads AARMAEIGEH…LAYVAAKLAL (193 aa). Mg(2+) contacts are provided by glutamine 668, glutamate 682, and asparagine 684. The Mn(2+) site is built by glutamine 668, glutamate 682, and asparagine 684. Lysine 747 bears the N6-acetyllysine mark. Positions 934–1455 are CPSase B; the sequence is HVLVLGSGVY…APPLKVHVDC (522 aa). Serine 1038 is modified (phosphoserine). The region spanning 1052 to 1243 is the ATP-grasp 2 domain; the sequence is SRLLDTIGIS…LVALATRVIM (192 aa). ATP-binding residues include arginine 1088, lysine 1127, isoleucine 1129, glutamate 1134, glycine 1159, valine 1160, histidine 1161, serine 1162, glutamine 1202, and glutamate 1214. Mg(2+) is bound by residues glutamine 1202, glutamate 1214, and asparagine 1216. Mn(2+)-binding residues include glutamine 1202, glutamate 1214, and asparagine 1216. The MGS-like domain maps to 1308 to 1462; the sequence is FKIPKKNILL…VDCMTSQKLV (155 aa). Position 1406 is a phosphoserine; by PKA (serine 1406). N6-acetyllysine is present on lysine 1411. Residues 1456 to 1788 form a DHOase (dihydroorotase) region; that stretch reads MTSQKLVRLP…VKGTVRRVVL (333 aa). Residues histidine 1471 and histidine 1473 each coordinate Zn(2+). Residues arginine 1475 and asparagine 1505 each contribute to the (S)-dihydroorotate site. Positions 1556, 1590, 1613, 1614, and 1637 each coordinate Zn(2+). Lysine 1556 carries the N6-carboxylysine modification. Arginine 1661 is a (S)-dihydroorotate binding site. Aspartate 1686 is a Zn(2+) binding site. Aspartate 1686 (for DHOase activity) is an active-site residue. Histidine 1690 and proline 1702 together coordinate (S)-dihydroorotate. The interval 1789-1917 is linker; that stretch reads RGEVAYIDGQ…GLLHPQTSPL (129 aa). Positions 1811–1899 are disordered; it reads KWPQGAVPQL…YPPPPVPRQA (89 aa). The span at 1825–1834 shows a compositional bias: polar residues; sequence PATSEMTTTP. Serine 1859 carries the phosphoserine; by RPS6KB1 and PKA modification. A compositionally biased stretch (basic and acidic residues) spans 1866 to 1878; it reads EEPKEKSSRKVAE. Serine 1873 carries the phosphoserine; by PKC; in vitro modification. Threonine 1884 carries the post-translational modification Phosphothreonine. 2 positions are modified to phosphoserine: serine 1900 and serine 1938. The interval 1918 to 2225 is ATCase (Aspartate transcarbamylase); sequence LHSLVGQHIL…ALLATVLGRF (308 aa). Residues arginine 1975 and threonine 1976 each coordinate carbamoyl phosphate. Position 2003 (lysine 2003) interacts with L-aspartate. Carbamoyl phosphate contacts are provided by arginine 2024, histidine 2052, and glutamine 2055. Residues arginine 2085 and arginine 2146 each coordinate L-aspartate. The carbamoyl phosphate site is built by methionine 2185 and proline 2186.

It in the N-terminal section; belongs to the CarA family. This sequence in the 2nd section; belongs to the CarB family. The protein in the 3rd section; belongs to the metallo-dependent hydrolases superfamily. DHOase family. CAD subfamily. In the C-terminal section; belongs to the aspartate/ornithine carbamoyltransferase superfamily. ATCase family. As to quaternary structure, homohexamer. Interacts with CIPC. It depends on Zn(2+) as a cofactor. Requires Mg(2+) as cofactor. Mn(2+) is required as a cofactor. Activated by MAP kinase (Erk1/2) phosphorylation just prior to the S phase of the cell cycle, when the demand for pyrimidine nucleotides is greatest, and down-regulated as the cells emerge from S phase by protein kinase A (PKA) phosphorylation. Phosphorylation at Ser-1859 by RPS6KB1 downstream of MTOR promotes oligomerization and stimulates dihydroorotase activity. Phosphorylation at Ser-1406 reduces sensitivity to feedback inhibition by UTP.

It localises to the cytoplasm. The protein localises to the nucleus. It carries out the reaction hydrogencarbonate + L-glutamine + 2 ATP + H2O = carbamoyl phosphate + L-glutamate + 2 ADP + phosphate + 2 H(+). The catalysed reaction is L-glutamine + H2O = L-glutamate + NH4(+). The enzyme catalyses hydrogencarbonate + NH4(+) + 2 ATP = carbamoyl phosphate + 2 ADP + phosphate + 2 H(+). It catalyses the reaction carbamoyl phosphate + L-aspartate = N-carbamoyl-L-aspartate + phosphate + H(+). It carries out the reaction (S)-dihydroorotate + H2O = N-carbamoyl-L-aspartate + H(+). Its pathway is pyrimidine metabolism; UMP biosynthesis via de novo pathway; (S)-dihydroorotate from bicarbonate: step 1/3. It functions in the pathway pyrimidine metabolism; UMP biosynthesis via de novo pathway; (S)-dihydroorotate from bicarbonate: step 2/3. It participates in pyrimidine metabolism; UMP biosynthesis via de novo pathway; (S)-dihydroorotate from bicarbonate: step 3/3. Its activity is regulated as follows. Allosterically regulated and controlled by phosphorylation. 5-phosphoribose 1-diphosphate (PRPP) is an activator while UMP and UTP are inhibitors of the CPSase reaction. Multifunctional protein that encodes the first 3 enzymatic activities of the de novo pyrimidine pathway: carbamoylphosphate synthetase (CPSase; EC 6.3.5.5), aspartate transcarbamylase (ATCase; EC 2.1.3.2) and dihydroorotase (DHOase; EC 3.5.2.3). The CPSase-function is accomplished in 2 steps, by a glutamine-dependent amidotransferase activity (GATase) that binds and cleaves glutamine to produce ammonia, followed by an ammonium-dependent carbamoyl phosphate synthetase, which reacts with the ammonia, hydrogencarbonate and ATP to form carbamoyl phosphate. The endogenously produced carbamoyl phosphate is sequestered and channeled to the ATCase active site. ATCase then catalyzes the formation of carbamoyl-L-aspartate from L-aspartate and carbamoyl phosphate. In the last step, DHOase catalyzes the cyclization of carbamoyl aspartate to dihydroorotate. In Homo sapiens (Human), this protein is Multifunctional protein CAD.